Here is a 536-residue protein sequence, read N- to C-terminus: Membrane protein insertase YidC (536 aa).

The chain crosses the membrane as a helical span at residues 14 to 34 (ILIATAISLLFFIPYSYFFAP). The interval 43–69 (STSMERAEQQAAPQTSSSPKEGQVSSV) is disordered. The span at 53–68 (AAPQTSSSPKEGQVSS) shows a compositional bias: polar residues. 5 helical membrane passes run 312–332 (VVEY…LDWL), 339–359 (WGWA…PLTY), 401–421 (GANP…FFAI), 436–456 (WILW…PILM), and 484–504 (PLIF…YWFV).

The protein belongs to the OXA1/ALB3/YidC family. Type 1 subfamily. As to quaternary structure, interacts with the Sec translocase complex via SecD. Specifically interacts with transmembrane segments of nascent integral membrane proteins during membrane integration.

It is found in the cell inner membrane. Functionally, required for the insertion and/or proper folding and/or complex formation of integral membrane proteins into the membrane. Involved in integration of membrane proteins that insert both dependently and independently of the Sec translocase complex, as well as at least some lipoproteins. Aids folding of multispanning membrane proteins. The polypeptide is Membrane protein insertase YidC (Wolinella succinogenes (strain ATCC 29543 / DSM 1740 / CCUG 13145 / JCM 31913 / LMG 7466 / NCTC 11488 / FDC 602W) (Vibrio succinogenes)).